Consider the following 1404-residue polypeptide: Proteoglycan 4 (1404 aa).

The first 24 residues, 1–24, serve as a signal peptide directing secretion; sequence MAWKTLPIYLLLLLSVFVIQQVSS. SMB domains are found at residues 26-69 and 66-108; these read DLSS…AELS and AELS…AEVH. 14 disulfide bridges follow: C30/C34, C30/C46, C34/C64, C44/C46, C44/C57, C50/C56, C57/C64, C70/C74, C70/C86, C74/C104, C84/C86, C84/C97, C90/C96, and C97/C104. Positions 111-966 are disordered; the sequence is TSPPSSKKAP…TTQVTSTTTQ (856 aa). S123 and S136 each carry an O-linked (GalNAc...) serine glycan. Residues 132–146 are compositionally biased toward basic residues; sequence TTKRSPKPPNKKKTK. A compositionally biased stretch (low complexity) spans 166 to 177; that stretch reads SSSSSSSSSSSS. The segment covering 193–205 has biased composition (basic and acidic residues); sequence ELQKKLKVKDNKK. An N-linked (GlcNAc...) asparagine glycan is attached at N206. Over residues 235–252 the composition is skewed to polar residues; sequence TPDTSTTQHNKVSTSPKI. O-linked (GalNAc...) threonine glycosylation is found at T240 and T253. Over residues 266–276 the composition is skewed to polar residues; that stretch reads PNSDTSKETSL. O-linked (GalNAc...) threonine glycans are attached at residues T277, T291, and T305. A glycan (O-linked (GalNAc...) serine) is linked at S306. T310 is a glycosylation site (O-linked (GalNAc...) threonine). The O-linked (GalNAc...) serine glycan is linked to S317. T324, T332, and T338 each carry an O-linked (GalNAc...) threonine glycan. 2 stretches are compositionally biased toward low complexity: residues 329–348 and 356–405; these read AKPT…TTPK and KEPA…KEPA. Repeat 1 spans residues 348–355; it reads KEPTPTTP. The 59 X 8 AA repeats of K-X-P-X-P-T-T-X stretch occupies residues 348–855; it reads KEPTPTTPKE…TPETPPPTTS (508 aa). A 2; approximate repeat occupies 356–363; it reads KEPASTTP. Repeat 3 spans residues 364-371; it reads KEPTPTTI. T367 carries an O-linked (GalNAc...) threonine glycan. One copy of the 4; approximate repeat lies at 372–378; it reads KSAPTTP. O-linked (GalNAc...) serine glycosylation occurs at S373. O-linked (GalNAc...) threonine glycosylation is found at T376, T384, and T385. Repeat 5 spans residues 379–386; that stretch reads KEPAPTTT. The 6; approximate repeat unit spans residues 387-393; the sequence is KSAPTTP. O-linked (GalNAc...) serine glycosylation occurs at S388. 7 O-linked (GalNAc...) threonine glycosylation sites follow: T391, T399, T400, T407, T408, T415, and T423. 4 consecutive repeat copies span residues 394-401, 402-409, 410-417, and 418-425. Low complexity predominate over residues 413 to 431; that stretch reads APTTTKEPAPTTTKSAPTT. The 11; approximate repeat unit spans residues 426-432; sequence KSAPTTP. The O-linked (GalNAc...) serine glycan is linked to S427. O-linked (GalNAc...) threonine glycans are attached at residues T430, T438, T439, T446, T447, T454, and T455. 2 stretches are compositionally biased toward pro residues: residues 432 to 467 and 476 to 506; these read PKEP…PKEP and PTTP…PKEP. 4 consecutive repeat copies span residues 433–440, 441–448, 449–456, and 457–464. The stretch at 465–471 is one 16; approximate repeat; that stretch reads KEPAPTT. The stretch at 472–479 is repeat 17; sequence KEPAPTTP. 8 O-linked (GalNAc...) threonine glycosylation sites follow: T477, T478, T485, T493, T494, T501, T502, and T509. The stretch at 480-487 is one 18; approximate repeat; it reads KEPAPTAP. A 19; approximate repeat occupies 488-495; sequence KKPAPTTP. Tandem repeats lie at residues 496-503, 504-511, 512-519, and 520-527. Positions 523–561 are enriched in low complexity; sequence APTTTKSAPTTTKEPAPTTTKSAPTTPKEPSPTTTKEPA. Residue T525 is glycosylated (O-linked (GalNAc...) threonine). One copy of the 24; approximate repeat lies at 528–534; the sequence is KSAPTTT. The O-linked (GalNAc...) serine glycan is linked to S529. O-linked (GalNAc...) threonine glycosylation is found at T532, T540, and T541. Repeat unit 25 spans residues 535–542; sequence KEPAPTTT. The stretch at 543–549 is one 26; approximate repeat; sequence KSAPTTP. 6 consecutive repeat copies span residues 550 to 557, 558 to 565, 566 to 573, 574 to 581, 582 to 589, and 590 to 597. Residue S553 is glycosylated (O-linked (GalNAc...) serine). 17 O-linked (GalNAc...) threonine glycosylation sites follow: T555, T563, T564, T571, T572, T579, T580, T587, T588, T595, T603, T604, T611, T612, T616, T619, and T627. A compositionally biased stretch (pro residues) spans 562-592; sequence PTTPKEPAPTTPKKPAPTTPKEPAPTTPKEP. The 33; approximate repeat unit spans residues 598–605; the sequence is KKPAPTTP. Positions 602–611 are enriched in pro residues; that stretch reads PTTPKEPAPT. Repeat 34 spans residues 606–613; the sequence is KEPAPTTP. Residues 612–636 are compositionally biased toward low complexity; sequence TPKETAPTTPKKLTPTTPEKLAPTT. Residues 614–621 form a 35; approximate repeat; sequence KETAPTTP. The stretch at 622 to 629 is one 36; approximate repeat; it reads KKLTPTTP. The 37; approximate repeat unit spans residues 638-645; it reads EKPAPTTP. Pro residues predominate over residues 653–667; that stretch reads PEEPTPTTPEEPAPT. One copy of the 38; approximate repeat lies at 662-669; that stretch reads EEPAPTTP. T676, T683, T684, T691, T692, T699, T700, T704, and T707 each carry an O-linked (GalNAc...) threonine glycan. The span at 677-699 shows a compositional bias: pro residues; it reads PKEPAPTTPKEPAPTTPKEPAPT. 3 repeat units span residues 678-685, 686-693, and 694-701. The segment covering 700–721 has biased composition (low complexity); sequence TPKETAPTTPKGTAPTTLKEPA. One copy of the 42; approximate repeat lies at 702–709; the sequence is KETAPTTP. One copy of the 43; approximate repeat lies at 710-717; the sequence is KGTAPTTL. The stretch at 718–725 is repeat 44; sequence KEPAPTTP. T723, T724, and T736 each carry an O-linked (GalNAc...) threonine glycan. The segment covering 728–761 has biased composition (low complexity); the sequence is PAPKELAPTTTKEPTSTTSDKPAPTTPKGTAPTT. One copy of the 45; approximate repeat lies at 731 to 738; that stretch reads KELAPTTT. Residues 739 to 746 form a 46; approximate repeat; it reads KEPTSTTS. The stretch at 747–754 is one 47; approximate repeat; that stretch reads DKPAPTTP. One copy of the 48; approximate repeat lies at 755–762; it reads KGTAPTTP. Residues 762–776 are compositionally biased toward pro residues; the sequence is PKEPAPTTPKEPAPT. Tandem repeats lie at residues 763-770 and 771-778. O-linked (GalNAc...) threonine glycosylation is found at T768, T769, T776, and T777. Residues 777–790 are compositionally biased toward low complexity; the sequence is TPKGTAPTTLKEPA. The 51; approximate repeat unit spans residues 779-786; that stretch reads KGTAPTTL. The stretch at 787 to 794 is repeat 52; sequence KEPAPTTP. O-linked (GalNAc...) threonine glycosylation is found at T792, T793, and T805. Low complexity predominate over residues 797–830; the sequence is PAPKELAPTTTKGPTSTTSDKPAPTTPKETAPTT. One copy of the 53; approximate repeat lies at 800–807; sequence KELAPTTT. The 54; approximate repeat unit spans residues 808 to 815; the sequence is KGPTSTTS. An O-linked (GalNAc...) serine glycan is attached at S812. One copy of the 55; approximate repeat lies at 816–823; the sequence is DKPAPTTP. A 56; approximate repeat occupies 824 to 831; sequence KETAPTTP. O-linked (GalNAc...) threonine glycosylation is found at T829, T837, and T838. A compositionally biased stretch (pro residues) spans 831-853; it reads PKEPAPTTPKKPAPTTPETPPPT. 2 repeat units span residues 832–839 and 840–847. Residues 848 to 855 form a 59; approximate repeat; the sequence is ETPPPTTS. Low complexity predominate over residues 854 to 866; the sequence is TSEVSTPTTTKEP. O-linked (GalNAc...) serine glycosylation occurs at S892. A compositionally biased stretch (low complexity) spans 899–914; sequence PTTKTPAATKPEMTTT. O-linked (GalNAc...) threonine glycosylation occurs at T900. Over residues 915–926 the composition is skewed to basic and acidic residues; that stretch reads AKDKTTERDLRT. Over residues 927 to 966 the composition is skewed to low complexity; sequence TPETTTAAPKMTKETATTTEKTTESKITATTTQVTSTTTQ. Residues T930 and T931 are each glycosylated (O-linked (GalNAc...) threonine). O-linked (GalNAc...) serine glycosylation is present at S962. O-linked (GalNAc...) threonine glycosylation is found at T963, T968, T975, T978, T979, and T980. The tract at residues 992–1104 is disordered; that stretch reads ITTTEIMNKP…EDAGGAEGET (113 aa). The segment covering 999–1012 has biased composition (basic and acidic residues); it reads NKPEETAKPKDRAT. The span at 1026–1047 shows a compositional bias: basic residues; it reads KAPKKPTSTKKPKTMPRVRKPK. T1039 carries an O-linked (GalNAc...) threonine glycan. Residues 1048 to 1060 show a composition bias toward low complexity; sequence TTPTPRKMTSTMP. Residues 1073 to 1085 show a composition bias toward polar residues; that stretch reads LQTTTRPNQTPNS. The cysteines at positions 1146 and 1403 are disulfide-linked. Hemopexin repeat units lie at residues 1148–1191 and 1192–1239; these read GKPV…VWGI and PSPI…FGGL. N-linked (GlcNAc...) asparagine glycosylation is present at N1159. O-linked (GalNAc...) threonine glycosylation is present at T1161.

Homodimer; disulfide-linked. Post-translationally, N-glycosylated. O-glycosylated; contains glycosaminoglycan chondroitin sulfate and keratan sulfate. O-glycosylated with sialylated oligosaccharides which are predominantly represented by the monosialylated core type I structure, NeuNAcalpha2-3Galbeta1-3GalNAc, with smaller amounts of disialylated O-glycans. In terms of processing, the disulfide bond between Cys-1146 and Cys-1403 is essential for protein cleavage. Post-translationally, proteolytically cleaved by cathepsin CTSG. In terms of tissue distribution, highly expressed in synovial tissue, cartilage and liver and weakly in heart and lung. Isoform B is expressed in kidney, lung, liver, heart and brain. Isoform C and isoform D are widely expressed.

It is found in the secreted. In terms of biological role, plays a role in boundary lubrication within articulating joints. Prevents protein deposition onto cartilage from synovial fluid by controlling adhesion-dependent synovial growth and inhibiting the adhesion of synovial cells to the cartilage surface. Functionally, isoform F plays a role as a growth factor acting on the primitive cells of both hematopoietic and endothelial cell lineages. In Homo sapiens (Human), this protein is Proteoglycan 4 (PRG4).